Consider the following 430-residue polypeptide: 3-phosphoshikimate 1-carboxyvinyltransferase (430 aa).

Residues Lys-33, Ser-34, and Arg-38 each contribute to the 3-phosphoshikimate site. Residue Lys-33 coordinates phosphoenolpyruvate. Gly-101 and Arg-129 together coordinate phosphoenolpyruvate. 6 residues coordinate 3-phosphoshikimate: Ser-172, Ser-173, Gln-174, Ser-201, Glu-319, and His-346. Gln-174 is a phosphoenolpyruvate binding site. Glu-319 serves as the catalytic Proton acceptor. Phosphoenolpyruvate is bound by residues Arg-350, Arg-391, and Lys-416.

The protein belongs to the EPSP synthase family. In terms of assembly, monomer.

It localises to the cytoplasm. It catalyses the reaction 3-phosphoshikimate + phosphoenolpyruvate = 5-O-(1-carboxyvinyl)-3-phosphoshikimate + phosphate. Its pathway is metabolic intermediate biosynthesis; chorismate biosynthesis; chorismate from D-erythrose 4-phosphate and phosphoenolpyruvate: step 6/7. In terms of biological role, catalyzes the transfer of the enolpyruvyl moiety of phosphoenolpyruvate (PEP) to the 5-hydroxyl of shikimate-3-phosphate (S3P) to produce enolpyruvyl shikimate-3-phosphate and inorganic phosphate. This is 3-phosphoshikimate 1-carboxyvinyltransferase from Corynebacterium glutamicum (strain ATCC 13032 / DSM 20300 / JCM 1318 / BCRC 11384 / CCUG 27702 / LMG 3730 / NBRC 12168 / NCIMB 10025 / NRRL B-2784 / 534).